Reading from the N-terminus, the 214-residue chain is Cell division protein SepF (214 aa).

A disordered region spans residues 23–70 (YYDDRAPSRGFPRPRFDDGYGRYDGDDYDDPRREPADCPPPAGYRGGY). Over residues 36–58 (PRFDDGYGRYDGDDYDDPRREPA) the composition is skewed to basic and acidic residues.

It belongs to the SepF family. Homodimer. Interacts with FtsZ.

The protein localises to the cytoplasm. Functionally, cell division protein that is part of the divisome complex and is recruited early to the Z-ring. Probably stimulates Z-ring formation, perhaps through the cross-linking of FtsZ protofilaments. Its function overlaps with FtsA. This chain is Cell division protein SepF, found in Mycolicibacterium paratuberculosis (strain ATCC BAA-968 / K-10) (Mycobacterium paratuberculosis).